A 286-amino-acid chain; its full sequence is Meteorin-like protein (286 aa).

The signal sequence occupies residues 1 to 21; sequence MLSPFLAYLLSVVLLCRIARS. Intrachain disulfides connect Cys-28-Cys-51, Cys-84-Cys-120, Cys-165-Cys-235, Cys-168-Cys-259, and Cys-178-Cys-281.

The protein belongs to the meteorin family.

The protein localises to the secreted. Hormone induced following exercise or cold exposure that promotes energy expenditure. Induced either in the skeletal muscle after exercise or in adipose tissue following cold exposure and is present in the circulation. Able to stimulate energy expenditure associated with the browning of the white fat depots and improves glucose tolerance. This chain is Meteorin-like protein (metrnl), found in Danio rerio (Zebrafish).